The sequence spans 461 residues: V-type ATP synthase beta chain (461 aa).

It belongs to the ATPase alpha/beta chains family.

Functionally, produces ATP from ADP in the presence of a proton gradient across the membrane. The V-type beta chain is a regulatory subunit. In Clostridium botulinum (strain Langeland / NCTC 10281 / Type F), this protein is V-type ATP synthase beta chain.